A 540-amino-acid chain; its full sequence is Hydroxylamine reductase (540 aa).

Residues Cys3, Cys6, Cys15, and Cys21 each coordinate [4Fe-4S] cluster. 8 residues coordinate hybrid [4Fe-2O-2S] cluster: His236, Glu260, Cys304, Cys395, Cys423, Cys448, Glu483, and Lys485. At Cys395 the chain carries Cysteine persulfide.

This sequence belongs to the HCP family. [4Fe-4S] cluster serves as cofactor. Requires hybrid [4Fe-2O-2S] cluster as cofactor.

It is found in the cytoplasm. The enzyme catalyses A + NH4(+) + H2O = hydroxylamine + AH2 + H(+). Functionally, catalyzes the reduction of hydroxylamine to form NH(3) and H(2)O. This chain is Hydroxylamine reductase, found in Methanosarcina mazei (strain ATCC BAA-159 / DSM 3647 / Goe1 / Go1 / JCM 11833 / OCM 88) (Methanosarcina frisia).